We begin with the raw amino-acid sequence, 124 residues long: Magnetosome protein MamC (124 aa).

The Cytoplasmic segment spans residues 2–8 (PFHLAPY). Residues 9–29 (LAKSVPGVGVLGALVGGAAAL) traverse the membrane as a helical segment. Residues 30–64 (AKNVRLLKEKRITNTEAAIDTGKETVGAGLATALS) lie on the Lumenal side of the membrane. An MIC, when fused with the C-terminus of maltose-binding protein (MBP) or expressed as a fragment, improves quality of iron particles during precipitation experiments, binds magnetite region spans residues 36-56 (LKEKRITNTEAAIDTGKETVG). A helical membrane pass occupies residues 65 to 85 (AVAATAVGGGLVVSLGTALVA). Topologically, residues 86-124 (GVAAKYAWDRGVDLVEKELNRGKAANGASDEDILRDELA) are cytoplasmic.

The protein belongs to the magnetosome MamC family. Probably interacts with MamA.

It is found in the magnetosome membrane. In terms of biological role, probably involved in magnetite crystal growth. The lumenal domain may bind the magnetite crystals, affecting crystal size and shape. This chain is Magnetosome protein MamC, found in Paramagnetospirillum magneticum (strain ATCC 700264 / AMB-1) (Magnetospirillum magneticum).